We begin with the raw amino-acid sequence, 424 residues long: 5-methylthioadenosine/S-adenosylhomocysteine deaminase (424 aa).

The Zn(2+) site is built by His60 and His62. Substrate contacts are provided by Glu89 and His181. Position 208 (His208) interacts with Zn(2+). Substrate is bound by residues Glu211 and Asp296. Asp296 is a binding site for Zn(2+).

It belongs to the metallo-dependent hydrolases superfamily. MTA/SAH deaminase family. Requires Zn(2+) as cofactor.

The catalysed reaction is S-adenosyl-L-homocysteine + H2O + H(+) = S-inosyl-L-homocysteine + NH4(+). It carries out the reaction S-methyl-5'-thioadenosine + H2O + H(+) = S-methyl-5'-thioinosine + NH4(+). In terms of biological role, catalyzes the deamination of 5-methylthioadenosine and S-adenosyl-L-homocysteine into 5-methylthioinosine and S-inosyl-L-homocysteine, respectively. Is also able to deaminate adenosine. The chain is 5-methylthioadenosine/S-adenosylhomocysteine deaminase from Thermococcus onnurineus (strain NA1).